The chain runs to 380 residues: Alkanesulfonate monooxygenase (380 aa).

It belongs to the SsuD family. Homotetramer.

The catalysed reaction is an alkanesulfonate + FMNH2 + O2 = an aldehyde + FMN + sulfite + H2O + 2 H(+). Functionally, catalyzes the desulfonation of aliphatic sulfonates. This Pectobacterium atrosepticum (strain SCRI 1043 / ATCC BAA-672) (Erwinia carotovora subsp. atroseptica) protein is Alkanesulfonate monooxygenase.